Here is a 587-residue protein sequence, read N- to C-terminus: MQEQKLQENDFSTLQTFKRLWPMIKPFKAGLIASGIALVFNALADSGLIYLLKPLLDDGFGKANHSFLKIMAFVVVGMIILRGVTNFISNYCLAWVSGKVVMTMRRRLFKHLMFMPVSFFDRNSTGKLLSRITYDSEMIASSSSGSLITIVREGAYIISLLAVMFYTSWELTLVLFVIGPIIAVLITIVSKIFRKLSKNLQDSMGELTATTEQMLKGHKVVISFGGQFVEEERFNKVSNNMRRKGMKMVTADSISDPVVQIIASLALVAVLFLATTPLIAEDNLSAGSFTVVFSSMLAMMRPLKSLTNVNSQFQRGMAACQTLFAILDLEPEKDNGTYKAEPAKGALEFKNVSFAYQGKEELALNNISFSVPAGKTVALVGRSGSGKSTIANLVTRFYDIEQGEILLDGVNIQDYRLSNLRENCAVVSQQVHLFNDTIANNIAYAAQDKYSREEIIAAAKAAYALEFIEKLPQGFDTVIGENGASLSGGQRQRLAIARALLRNSPVLILDEATSALDTESERAIQSALDELKKDRTVIVIAHRLSTIENADEILVIDHGEIRERGNHKALLEQNGAYKQLYSMQFSG.

The next 5 membrane-spanning stretches (helical) occupy residues 31–51, 68–88, 145–165, 169–189, and 259–279; these read LIAS…LIYL, LKIM…TNFI, GSLI…AVMF, WELT…ITIV, and VQII…TPLI. An ABC transmembrane type-1 domain is found at 32-315; that stretch reads IASGIALVFN…LTNVNSQFQR (284 aa). The ABC transporter domain occupies 347–583; the sequence is LEFKNVSFAY…NGAYKQLYSM (237 aa). Position 381-388 (381-388) interacts with ATP; sequence GRSGSGKS.

The protein belongs to the ABC transporter superfamily. Lipid exporter (TC 3.A.1.106) family. In terms of assembly, homodimer.

Its subcellular location is the cell inner membrane. It catalyses the reaction ATP + H2O + lipid A-core oligosaccharideSide 1 = ADP + phosphate + lipid A-core oligosaccharideSide 2.. Functionally, involved in lipopolysaccharide (LPS) biosynthesis. Translocates lipid A-core from the inner to the outer leaflet of the inner membrane. Transmembrane domains (TMD) form a pore in the inner membrane and the ATP-binding domain (NBD) is responsible for energy generation. The chain is ATP-dependent lipid A-core flippase from Haemophilus influenzae (strain 86-028NP).